Reading from the N-terminus, the 384-residue chain is Glutamate 5-kinase (384 aa).

K24 contacts ATP. Residues S64, D149, and N161 each contribute to the substrate site. Residues 181 to 182 (TD) and 223 to 229 (TGGMRTK) contribute to the ATP site. A PUA domain is found at 288 to 370 (PGAILIDAGA…RDIQTLLGYT (83 aa)).

The protein belongs to the glutamate 5-kinase family.

Its subcellular location is the cytoplasm. The enzyme catalyses L-glutamate + ATP = L-glutamyl 5-phosphate + ADP. The protein operates within amino-acid biosynthesis; L-proline biosynthesis; L-glutamate 5-semialdehyde from L-glutamate: step 1/2. Catalyzes the transfer of a phosphate group to glutamate to form L-glutamate 5-phosphate. The polypeptide is Glutamate 5-kinase (Xylella fastidiosa (strain M12)).